Here is a 392-residue protein sequence, read N- to C-terminus: tRNA (guanine-N(7)-)-methyltransferase (392 aa).

Glu-123, Glu-148, and Asp-175 together coordinate S-adenosyl-L-methionine. Positions 201 and 231 each coordinate substrate.

It belongs to the class I-like SAM-binding methyltransferase superfamily. TrmB family.

It carries out the reaction guanosine(46) in tRNA + S-adenosyl-L-methionine = N(7)-methylguanosine(46) in tRNA + S-adenosyl-L-homocysteine. It functions in the pathway tRNA modification; N(7)-methylguanine-tRNA biosynthesis. Catalyzes the formation of N(7)-methylguanine at position 46 (m7G46) in tRNA. The protein is tRNA (guanine-N(7)-)-methyltransferase of Campylobacter jejuni subsp. jejuni serotype O:6 (strain 81116 / NCTC 11828).